The primary structure comprises 353 residues: UPF0283 membrane protein YcjF (353 aa).

The next 3 membrane-spanning stretches (helical) occupy residues 70–90, 100–120, and 213–233; these read MVMG…VQWT, VALG…GSVV, and ESTL…FIAW.

It belongs to the UPF0283 family.

The protein resides in the cell inner membrane. The chain is UPF0283 membrane protein YcjF from Shigella boydii serotype 4 (strain Sb227).